The following is a 177-amino-acid chain: Endoribonuclease YbeY (177 aa).

Residues His118, His122, and His128 each coordinate Zn(2+).

It belongs to the endoribonuclease YbeY family. Zn(2+) is required as a cofactor.

The protein localises to the cytoplasm. Its function is as follows. Single strand-specific metallo-endoribonuclease involved in late-stage 70S ribosome quality control and in maturation of the 3' terminus of the 16S rRNA. This Mycobacterium sp. (strain JLS) protein is Endoribonuclease YbeY.